A 326-amino-acid polypeptide reads, in one-letter code: MRPLMLQGHERSITQIKYNREGDLLFSCSKDQKPNVWYSLNGERLGTYDGHQGAVWCLDVDWESRKLITGAGDMTAKIWDVEYGTVIASIPTKSSVRTSNFSFSGNQAAYSTDKAMGQSCELFLIDVRNADSSLSEQEPTLRIPMTESKITSMLWGPLDETIITGHDNGNIAIWDIRKGQKVVDSGTDHSAGINDMQLSKDGTMFVTASKDTTAKLFDSESLMCLKTYKTERPVNSAAISPIMDHVVLGGGQDAMEVTTTSTKAGKFDSRFFHLIYEEEFARLKGHFGPINSLAFHPDGKSYASGGEDGFVRVQTFDSTYFENIFE.

WD repeat units follow at residues 8–47, 50–89, 145–184, 188–227, and 285–326; these read GHER…RLGT, GHQG…VIAS, MTES…KVVD, DHSA…CLKT, and GHFG…NIFE.

Belongs to the eIF-3 subunit I family. As to quaternary structure, component of the eukaryotic translation initiation factor 3 (eIF-3) complex. The eIF-3 complex interacts with pix.

It is found in the cytoplasm. Component of the eukaryotic translation initiation factor 3 (eIF-3) complex, which is involved in protein synthesis of a specialized repertoire of mRNAs and, together with other initiation factors, stimulates binding of mRNA and methionyl-tRNAi to the 40S ribosome. The eIF-3 complex specifically targets and initiates translation of a subset of mRNAs involved in cell proliferation. This chain is Eukaryotic translation initiation factor 3 subunit I, found in Drosophila sechellia (Fruit fly).